The chain runs to 379 residues: Tryptophan 2,3-dioxygenase (379 aa).

Substrate-binding positions include 57–61 and arginine 128; that span reads FIITH. Histidine 312 provides a ligand contact to heme. Position 327 (threonine 327) interacts with substrate.

The protein belongs to the tryptophan 2,3-dioxygenase family. In terms of assembly, homotetramer. Dimer of dimers. Heme serves as cofactor.

The enzyme catalyses L-tryptophan + O2 = N-formyl-L-kynurenine. The protein operates within amino-acid degradation; L-tryptophan degradation via kynurenine pathway; L-kynurenine from L-tryptophan: step 1/2. It functions in the pathway pigment biosynthesis; ommochrome biosynthesis. In terms of biological role, heme-dependent dioxygenase that catalyzes the oxidative cleavage of the L-tryptophan (L-Trp) pyrrole ring and converts L-tryptophan to N-formyl-L-kynurenine. Catalyzes the oxidative cleavage of the indole moiety. Required during larval growth to control the level of potentially harmful free tryptophan in the hemolymph. In the adult the same reaction is the first step in the ommochrome biosynthetic pathway. In Drosophila melanogaster (Fruit fly), this protein is Tryptophan 2,3-dioxygenase.